We begin with the raw amino-acid sequence, 223 residues long: Uracil-DNA glycosylase (223 aa).

D61 serves as the catalytic Proton acceptor.

The protein belongs to the uracil-DNA glycosylase (UDG) superfamily. UNG family.

Its subcellular location is the cytoplasm. It carries out the reaction Hydrolyzes single-stranded DNA or mismatched double-stranded DNA and polynucleotides, releasing free uracil.. Functionally, excises uracil residues from the DNA which can arise as a result of misincorporation of dUMP residues by DNA polymerase or due to deamination of cytosine. The polypeptide is Uracil-DNA glycosylase (Haemophilus ducreyi (strain 35000HP / ATCC 700724)).